The following is a 626-amino-acid chain: Chaperone protein HtpG (626 aa).

Residues 1 to 341 (MIKKEFKAES…SEDLSLNISR (341 aa)) are a; substrate-binding. The segment at 342–552 (EMLQHDRQLK…DGDVTIEMEK (211 aa)) is b. The segment at 553-626 (ILSAMPNNQE…FTNDICKLMS (74 aa)) is c.

The protein belongs to the heat shock protein 90 family. As to quaternary structure, homodimer.

It is found in the cytoplasm. Functionally, molecular chaperone. Has ATPase activity. The protein is Chaperone protein HtpG of Alkaliphilus metalliredigens (strain QYMF).